The sequence spans 422 residues: Aliphatic (R)-hydroxynitrile lyase (422 aa).

Residues Cys-63, His-85, Cys-115, Cys-118, Cys-121, Cys-129, and Cys-199 each contribute to the Zn(2+) site.

This sequence belongs to the zinc-containing alcohol dehydrogenase family. Homodimer. The cofactor is Zn(2+).

The enzyme catalyses (2R)-2-hydroxy-2-methylbutanenitrile = butan-2-one + hydrogen cyanide. Involved in the catabolism of cyanogenic glycosides. Naturally occurring substrates are the aliphatic acetone cyanohydrin and butan-2-one cyanohydrin, which are the aglycones of the cyanogenic glycosides linamarin, lotaustralin, linustatin and neolinustatin. Can use various aliphatic ketones and aldehydes as substrates, but not aromatic ketones. The sequence is that of Aliphatic (R)-hydroxynitrile lyase from Linum usitatissimum (Flax).